The primary structure comprises 328 residues: Radiation response metalloprotease IrrE (328 aa).

The disordered stretch occupies residues 1–31 (MPSANVSPPCPSGVRGGGMGPKAKAEASKPH). His118 is a binding site for Zn(2+). The active site involves Glu119. Zn(2+)-binding residues include His122 and Glu149. Disordered stretches follow at residues 217 to 238 (PREQ…LTVR) and 309 to 328 (RLGR…DAAQ).

In terms of biological role, plays a central regulatory role in DNA repair and protection pathways in response to radiation stress. Acts as a site-specific metalloprotease that cleaves and inactivates the repressor protein DdrO, resulting in induced expression of genes required for DNA repair and cell survival after exposure to radiation. Regulates the expression of dozens of proteins from different pathways, including the important DNA repair proteins RecA and PprA. Binds to the promoters of recA and pprA. This Deinococcus radiodurans (strain ATCC 13939 / DSM 20539 / JCM 16871 / CCUG 27074 / LMG 4051 / NBRC 15346 / NCIMB 9279 / VKM B-1422 / R1) protein is Radiation response metalloprotease IrrE.